The chain runs to 330 residues: Ketol-acid reductoisomerase (NADP(+)) (330 aa).

Positions 2–181 (MEKYHETDAD…GATRAVVLET (180 aa)) constitute a KARI N-terminal Rossmann domain. NADP(+) contacts are provided by residues 25–28 (YGSQ), arginine 48, serine 52, and 82–85 (DENQ). Residue histidine 107 is part of the active site. Glycine 133 contacts NADP(+). Residues 182-327 (TFREETETDL…SELRAMMPQF (146 aa)) enclose the KARI C-terminal knotted domain. Mg(2+) is bound by residues aspartate 190, glutamate 194, glutamate 226, and glutamate 230. Serine 251 lines the substrate pocket.

This sequence belongs to the ketol-acid reductoisomerase family. Mg(2+) serves as cofactor.

The enzyme catalyses (2R)-2,3-dihydroxy-3-methylbutanoate + NADP(+) = (2S)-2-acetolactate + NADPH + H(+). The catalysed reaction is (2R,3R)-2,3-dihydroxy-3-methylpentanoate + NADP(+) = (S)-2-ethyl-2-hydroxy-3-oxobutanoate + NADPH + H(+). The protein operates within amino-acid biosynthesis; L-isoleucine biosynthesis; L-isoleucine from 2-oxobutanoate: step 2/4. It functions in the pathway amino-acid biosynthesis; L-valine biosynthesis; L-valine from pyruvate: step 2/4. Involved in the biosynthesis of branched-chain amino acids (BCAA). Catalyzes an alkyl-migration followed by a ketol-acid reduction of (S)-2-acetolactate (S2AL) to yield (R)-2,3-dihydroxy-isovalerate. In the isomerase reaction, S2AL is rearranged via a Mg-dependent methyl migration to produce 3-hydroxy-3-methyl-2-ketobutyrate (HMKB). In the reductase reaction, this 2-ketoacid undergoes a metal-dependent reduction by NADPH to yield (R)-2,3-dihydroxy-isovalerate. The polypeptide is Ketol-acid reductoisomerase (NADP(+)) (Methanocorpusculum labreanum (strain ATCC 43576 / DSM 4855 / Z)).